Consider the following 377-residue polypeptide: MIDPLDLTQRLIACPSVTPADAGAMAVIATALESIGFTVHRFAAGEAPDGPVENLFAIRGQGGPHFAFAGHSDVVPPGDGWTSDPFVPEIRGELLHGRGAVDMKGAIAAFIAAAARLGDHPGTISLIITGDEEGPATFGTVALIDWMKARGLCPDLCLVGEPTSTHRLGDMVKIGRRGSVNMWIENVGTQGHVAYPHLAANPIPALVKALDALAALHLDDGNAWFQPSNLEITTVDVGNAATNVIPAVARARLNIRFNDEHRGADLVELVRRTVAEHAPAATVRAVISGESFITPPGDFSALISAAIMKVTGLTPELSTTGGTSDARFLSKLCPVVEFGLCNATMHKLDEAVAIPDLHALADIYEDIVRTVLAHPGA.

H71 contributes to the Zn(2+) binding site. The active site involves D73. Residue D102 coordinates Zn(2+). The active-site Proton acceptor is the E132. Zn(2+)-binding residues include E133, E161, and H346.

The protein belongs to the peptidase M20A family. DapE subfamily. Homodimer. Zn(2+) is required as a cofactor. Requires Co(2+) as cofactor.

It carries out the reaction N-succinyl-(2S,6S)-2,6-diaminopimelate + H2O = (2S,6S)-2,6-diaminopimelate + succinate. Its pathway is amino-acid biosynthesis; L-lysine biosynthesis via DAP pathway; LL-2,6-diaminopimelate from (S)-tetrahydrodipicolinate (succinylase route): step 3/3. Catalyzes the hydrolysis of N-succinyl-L,L-diaminopimelic acid (SDAP), forming succinate and LL-2,6-diaminopimelate (DAP), an intermediate involved in the bacterial biosynthesis of lysine and meso-diaminopimelic acid, an essential component of bacterial cell walls. The chain is Succinyl-diaminopimelate desuccinylase from Rhizorhabdus wittichii (strain DSM 6014 / CCUG 31198 / JCM 15750 / NBRC 105917 / EY 4224 / RW1) (Sphingomonas wittichii).